The sequence spans 505 residues: GLPWYRVHTVLINDPGRLIAAHLMHTALVAGWAGSMALYELATFDPSDPVLNPMWRQGMFVLPFMARLGVTGSWSGWSITGETGIDPGFWSFEGVALAHIVLSGLLFLAACWHWVYWDLELFRDPRTGEPALDLPKMFGIHLFLAGLLCFGFGAFHLTGLFGPGMWVSDPYGLTGSVQPVAPEWGPDGFNPYNPGGVVAHHIAAGIVGIIAGLFHILVRPPQRLYKALRMGNIETVLSSSIAAVFFAAFVVAGTMWYGSATTPIELFGPTRYQWDSSYFQQEINRRVQASLASGATLEEAWSAIPEKLAFYDYIGNNPAKGGLFRTGPMNKGDGIAQAWKGHAVFRNKEGEELFVRRMPAFFESFPVILTDKNGVVKADIPFRRAESKYSFEQQGVTVSFYGGELNGQTFTDPPTVKSYARKAIFGEIFEFDTETLNSDGIFRTSPRGWFTFAHAVFALLFFFGHIWHGARTLFRDVFSGIDPELSPEQVEWGFYQKVGDVTTRK.

The Cytoplasmic segment spans residues 1-19 (GLPWYRVHTVLINDPGRLI). Positions 8, 22, 25, 99, and 113 each coordinate chlorophyll a. A helical membrane pass occupies residues 20 to 35 (AAHLMHTALVAGWAGS). Over 36–99 (MALYELATFD…WSFEGVALAH (64 aa)) the chain is Lumenal. Residues 100-114 (IVLSGLLFLAACWHW) traverse the membrane as a helical segment. At 115–138 (VYWDLELFRDPRTGEPALDLPKMF) the chain is on the cytoplasmic side. A helical transmembrane segment spans residues 139–155 (GIHLFLAGLLCFGFGAF). Chlorophyll a is bound by residues His-141, His-156, His-200, His-201, and His-215. The Lumenal segment spans residues 156–201 (HLTGLFGPGMWVSDPYGLTGSVQPVAPEWGPDGFNPYNPGGVVAHH). Residues 202 to 217 (IAAGIVGIIAGLFHIL) traverse the membrane as a helical segment. Residues 218–235 (VRPPQRLYKALRMGNIET) are Cytoplasmic-facing. A helical membrane pass occupies residues 236–251 (VLSSSIAAVFFAAFVV). At 252–455 (AGTMWYGSAT…PRGWFTFAHA (204 aa)) the chain is on the lumenal side. Chlorophyll a contacts are provided by His-454, His-465, and His-468. The chain crosses the membrane as a helical span at residues 456–471 (VFALLFFFGHIWHGAR). Residues 472 to 505 (TLFRDVFSGIDPELSPEQVEWGFYQKVGDVTTRK) lie on the Cytoplasmic side of the membrane.

Belongs to the PsbB/PsbC family. PsbB subfamily. As to quaternary structure, PSII is composed of 1 copy each of membrane proteins PsbA, PsbB, PsbC, PsbD, PsbE, PsbF, PsbH, PsbI, PsbJ, PsbK, PsbL, PsbM, PsbT, PsbX, PsbY, PsbZ, Psb30/Ycf12, peripheral proteins PsbO, CyanoQ (PsbQ), PsbU, PsbV and a large number of cofactors. It forms dimeric complexes. Binds multiple chlorophylls. PSII binds additional chlorophylls, carotenoids and specific lipids. serves as cofactor.

The protein localises to the cellular thylakoid membrane. One of the components of the core complex of photosystem II (PSII). It binds chlorophyll and helps catalyze the primary light-induced photochemical processes of PSII. PSII is a light-driven water:plastoquinone oxidoreductase, using light energy to abstract electrons from H(2)O, generating O(2) and a proton gradient subsequently used for ATP formation. This chain is Photosystem II CP47 reaction center protein, found in Thermostichus vulcanus (Synechococcus vulcanus).